Reading from the N-terminus, the 67-residue chain is MRCVPVFVILLLLIASTPSVDARPNPKDDVPLASFHEDANGILQMLWKKGRSCCPSPTSCCPWGKRK.

The N-terminal stretch at 1-22 (MRCVPVFVILLLLIASTPSVDA) is a signal peptide. The propeptide occupies 23–51 (RPNPKDDVPLASFHEDANGILQMLWKKGR). Position 63 is a tryptophan amide (Trp63).

The protein belongs to the conotoxin T superfamily. Post-translationally, contains 2 disulfide bonds that can be either 'C1-C3, C2-C4' or 'C1-C4, C2-C3', since these disulfide connectivities have been observed for conotoxins with cysteine framework V (for examples, see AC P0DQQ7 and AC P81755). As to expression, expressed by the venom duct.

It localises to the secreted. The polypeptide is Conotoxin Pu5.1 (Conus pulicarius (Flea-bitten cone)).